We begin with the raw amino-acid sequence, 33 residues long: Gaegurin-3 (33 aa).

Cys-27 and Cys-33 are oxidised to a cystine.

This sequence belongs to the frog skin active peptide (FSAP) family. Brevinin subfamily. Monomer. In terms of tissue distribution, expressed by the skin glands.

It is found in the secreted. Functionally, has a non-hemolytic activity. Has a broad spectrum of activity against both Gram-positive and Gram-negative bacteria, fungi and protozoa. In Glandirana rugosa (Japanese wrinkled frog), this protein is Gaegurin-3 (GGN3).